We begin with the raw amino-acid sequence, 106 residues long: Met repressor (106 aa).

It belongs to the MetJ family. As to quaternary structure, homodimer.

Its subcellular location is the cytoplasm. Its function is as follows. This regulatory protein, when combined with SAM (S-adenosylmethionine) represses the expression of the methionine regulon and of enzymes involved in SAM synthesis. The sequence is that of Met repressor from Vibrio atlanticus (strain LGP32) (Vibrio splendidus (strain Mel32)).